The chain runs to 376 residues: Succinyl-diaminopimelate desuccinylase (376 aa).

Histidine 67 contributes to the Zn(2+) binding site. The active site involves aspartate 69. Residue aspartate 100 coordinates Zn(2+). The active-site Proton acceptor is the glutamate 134. Glutamate 135, glutamate 163, and histidine 349 together coordinate Zn(2+).

It belongs to the peptidase M20A family. DapE subfamily. As to quaternary structure, homodimer. Zn(2+) serves as cofactor. Requires Co(2+) as cofactor.

It carries out the reaction N-succinyl-(2S,6S)-2,6-diaminopimelate + H2O = (2S,6S)-2,6-diaminopimelate + succinate. The protein operates within amino-acid biosynthesis; L-lysine biosynthesis via DAP pathway; LL-2,6-diaminopimelate from (S)-tetrahydrodipicolinate (succinylase route): step 3/3. Catalyzes the hydrolysis of N-succinyl-L,L-diaminopimelic acid (SDAP), forming succinate and LL-2,6-diaminopimelate (DAP), an intermediate involved in the bacterial biosynthesis of lysine and meso-diaminopimelic acid, an essential component of bacterial cell walls. In Actinobacillus succinogenes (strain ATCC 55618 / DSM 22257 / CCUG 43843 / 130Z), this protein is Succinyl-diaminopimelate desuccinylase.